Consider the following 39-residue polypeptide: Photosystem II reaction center protein Y (39 aa).

Residues 7-25 form a helical membrane-spanning segment; sequence LLIVLLPILAAAGWAVFNI.

The protein belongs to the PsbY family. PSII is composed of 1 copy each of membrane proteins PsbA, PsbB, PsbC, PsbD, PsbE, PsbF, PsbH, PsbI, PsbJ, PsbK, PsbL, PsbM, PsbT, PsbX, PsbY, PsbZ, Psb30/Ycf12, peripheral proteins PsbO, CyanoQ (PsbQ), PsbU, PsbV and a large number of cofactors. It forms dimeric complexes.

It localises to the cellular thylakoid membrane. In terms of biological role, loosely associated component of the core of photosystem II (PSII), it is not always seen in crystals. PSII is a light-driven water plastoquinone oxidoreductase, using light energy to abstract electrons from H(2)O, generating a proton gradient subsequently used for ATP formation. The sequence is that of Photosystem II reaction center protein Y from Trichodesmium erythraeum (strain IMS101).